We begin with the raw amino-acid sequence, 282 residues long: 2-dehydro-3-deoxyphosphooctonate aldolase (282 aa).

It belongs to the KdsA family.

The protein localises to the cytoplasm. It carries out the reaction D-arabinose 5-phosphate + phosphoenolpyruvate + H2O = 3-deoxy-alpha-D-manno-2-octulosonate-8-phosphate + phosphate. It participates in carbohydrate biosynthesis; 3-deoxy-D-manno-octulosonate biosynthesis; 3-deoxy-D-manno-octulosonate from D-ribulose 5-phosphate: step 2/3. The protein operates within bacterial outer membrane biogenesis; lipopolysaccharide biosynthesis. The sequence is that of 2-dehydro-3-deoxyphosphooctonate aldolase from Chromobacterium violaceum (strain ATCC 12472 / DSM 30191 / JCM 1249 / CCUG 213 / NBRC 12614 / NCIMB 9131 / NCTC 9757 / MK).